A 152-amino-acid polypeptide reads, in one-letter code: UPF0756 membrane protein Daud_1310 (152 aa).

4 helical membrane passes run 14-34, 51-71, 76-96, and 112-132; these read LVGVLAKSHLIAAAACILLFI, LELGLLILLLTIMVPLANGKI, IIYNLTSIPGLLAILGGALAT, and IIFGLIIGSIFGILFLGGMPV.

The protein belongs to the UPF0756 family.

Its subcellular location is the cell membrane. This Desulforudis audaxviator (strain MP104C) protein is UPF0756 membrane protein Daud_1310.